Consider the following 1364-residue polypeptide: DNA-directed RNA polymerase subunit beta (1364 aa).

The protein belongs to the RNA polymerase beta chain family. As to quaternary structure, the RNAP catalytic core consists of 2 alpha, 1 beta, 1 beta' and 1 omega subunit. When a sigma factor is associated with the core the holoenzyme is formed, which can initiate transcription.

The catalysed reaction is RNA(n) + a ribonucleoside 5'-triphosphate = RNA(n+1) + diphosphate. In terms of biological role, DNA-dependent RNA polymerase catalyzes the transcription of DNA into RNA using the four ribonucleoside triphosphates as substrates. The protein is DNA-directed RNA polymerase subunit beta of Desulfatibacillum aliphaticivorans.